The following is a 430-amino-acid chain: Serine--tRNA ligase (430 aa).

Positions 47-66 (AQAEQNKASKEAGAAKGRGD) are disordered. 231-233 (TSE) lines the L-serine pocket. 262–264 (RSE) is an ATP binding site. Glu-285 contacts L-serine. 349-352 (EISS) contacts ATP. L-serine is bound at residue Ser-385.

Belongs to the class-II aminoacyl-tRNA synthetase family. Type-1 seryl-tRNA synthetase subfamily. As to quaternary structure, homodimer. The tRNA molecule binds across the dimer.

It is found in the cytoplasm. It carries out the reaction tRNA(Ser) + L-serine + ATP = L-seryl-tRNA(Ser) + AMP + diphosphate + H(+). It catalyses the reaction tRNA(Sec) + L-serine + ATP = L-seryl-tRNA(Sec) + AMP + diphosphate + H(+). Its pathway is aminoacyl-tRNA biosynthesis; selenocysteinyl-tRNA(Sec) biosynthesis; L-seryl-tRNA(Sec) from L-serine and tRNA(Sec): step 1/1. In terms of biological role, catalyzes the attachment of serine to tRNA(Ser). Is also able to aminoacylate tRNA(Sec) with serine, to form the misacylated tRNA L-seryl-tRNA(Sec), which will be further converted into selenocysteinyl-tRNA(Sec). This chain is Serine--tRNA ligase, found in Paracoccus denitrificans (strain Pd 1222).